We begin with the raw amino-acid sequence, 215 residues long: Pyridoxine/pyridoxamine 5'-phosphate oxidase (215 aa).

Residues 9-12 and Lys69 each bind substrate; that span reads RRDY. FMN is bound by residues 64-69, 79-80, Lys86, and Gln108; these read RVLLLK and FT. 3 residues coordinate substrate: Tyr126, Arg130, and Ser134. FMN contacts are provided by residues 143–144 and Trp188; that span reads QS. 194–196 lines the substrate pocket; that stretch reads RLH. Arg198 contributes to the FMN binding site.

Belongs to the pyridoxamine 5'-phosphate oxidase family. Homodimer. FMN serves as cofactor.

The enzyme catalyses pyridoxamine 5'-phosphate + O2 + H2O = pyridoxal 5'-phosphate + H2O2 + NH4(+). It carries out the reaction pyridoxine 5'-phosphate + O2 = pyridoxal 5'-phosphate + H2O2. It participates in cofactor metabolism; pyridoxal 5'-phosphate salvage; pyridoxal 5'-phosphate from pyridoxamine 5'-phosphate: step 1/1. The protein operates within cofactor metabolism; pyridoxal 5'-phosphate salvage; pyridoxal 5'-phosphate from pyridoxine 5'-phosphate: step 1/1. Functionally, catalyzes the oxidation of either pyridoxine 5'-phosphate (PNP) or pyridoxamine 5'-phosphate (PMP) into pyridoxal 5'-phosphate (PLP). The polypeptide is Pyridoxine/pyridoxamine 5'-phosphate oxidase (Pseudomonas savastanoi pv. phaseolicola (strain 1448A / Race 6) (Pseudomonas syringae pv. phaseolicola (strain 1448A / Race 6))).